The sequence spans 120 residues: Large ribosomal subunit protein uL18 (120 aa).

It belongs to the universal ribosomal protein uL18 family. In terms of assembly, part of the 50S ribosomal subunit; part of the 5S rRNA/L5/L18/L25 subcomplex. Contacts the 5S and 23S rRNAs.

Functionally, this is one of the proteins that bind and probably mediate the attachment of the 5S RNA into the large ribosomal subunit, where it forms part of the central protuberance. This chain is Large ribosomal subunit protein uL18, found in Gluconobacter oxydans (strain 621H) (Gluconobacter suboxydans).